Reading from the N-terminus, the 100-residue chain is NADH-quinone oxidoreductase subunit K (100 aa).

The next 3 membrane-spanning stretches (helical) occupy residues 4-24 (LQHGLLLAAILFVLGLTGLVI), 28-48 (LLFMLISLEIMINASALAFVV), and 60-80 (VMYILAITLAAAEASIGLALL).

The protein belongs to the complex I subunit 4L family. As to quaternary structure, NDH-1 is composed of 13 different subunits. Subunits NuoA, H, J, K, L, M, N constitute the membrane sector of the complex.

The protein localises to the cell inner membrane. The catalysed reaction is a quinone + NADH + 5 H(+)(in) = a quinol + NAD(+) + 4 H(+)(out). Its function is as follows. NDH-1 shuttles electrons from NADH, via FMN and iron-sulfur (Fe-S) centers, to quinones in the respiratory chain. The immediate electron acceptor for the enzyme in this species is believed to be ubiquinone. Couples the redox reaction to proton translocation (for every two electrons transferred, four hydrogen ions are translocated across the cytoplasmic membrane), and thus conserves the redox energy in a proton gradient. In Musicola paradisiaca (strain Ech703) (Dickeya paradisiaca), this protein is NADH-quinone oxidoreductase subunit K.